Here is a 300-residue protein sequence, read N- to C-terminus: Actin-related protein 2/3 complex subunit 2-B (300 aa).

Belongs to the ARPC2 family. Component of the Arp2/3 complex composed of actr2/arp2, actr3/arp3, arpc1 (arpc1a or arpc1b), arpc2, arpc3, arpc4 and arpc5.

The protein localises to the cytoplasm. It localises to the cytoskeleton. It is found in the cell projection. The protein resides in the nucleus. Its function is as follows. Actin-binding component of the Arp2/3 complex, a multiprotein complex that mediates actin polymerization upon stimulation by nucleation-promoting factor (NPF). The Arp2/3 complex mediates the formation of branched actin networks in the cytoplasm, providing the force for cell motility. In addition to its role in the cytoplasmic cytoskeleton, the Arp2/3 complex also promotes actin polymerization in the nucleus, thereby regulating gene transcription and repair of damaged DNA. The Arp2/3 complex promotes homologous recombination (HR) repair in response to DNA damage by promoting nuclear actin polymerization, leading to drive motility of double-strand breaks (DSBs). In Xenopus laevis (African clawed frog), this protein is Actin-related protein 2/3 complex subunit 2-B (arpc2-b).